Here is a 177-residue protein sequence, read N- to C-terminus: Large ribosomal subunit protein uL6 (177 aa).

It belongs to the universal ribosomal protein uL6 family. Part of the 50S ribosomal subunit.

Its function is as follows. This protein binds to the 23S rRNA, and is important in its secondary structure. It is located near the subunit interface in the base of the L7/L12 stalk, and near the tRNA binding site of the peptidyltransferase center. The protein is Large ribosomal subunit protein uL6 of Psychrobacter arcticus (strain DSM 17307 / VKM B-2377 / 273-4).